A 280-amino-acid chain; its full sequence is Bifunctional protein FolD (280 aa).

Residues 158 to 160 (GES), I183, and I222 each bind NADP(+).

Belongs to the tetrahydrofolate dehydrogenase/cyclohydrolase family. As to quaternary structure, homodimer.

It carries out the reaction (6R)-5,10-methylene-5,6,7,8-tetrahydrofolate + NADP(+) = (6R)-5,10-methenyltetrahydrofolate + NADPH. The catalysed reaction is (6R)-5,10-methenyltetrahydrofolate + H2O = (6R)-10-formyltetrahydrofolate + H(+). It functions in the pathway one-carbon metabolism; tetrahydrofolate interconversion. In terms of biological role, catalyzes the oxidation of 5,10-methylenetetrahydrofolate to 5,10-methenyltetrahydrofolate and then the hydrolysis of 5,10-methenyltetrahydrofolate to 10-formyltetrahydrofolate. In Mycoplasma mobile (strain ATCC 43663 / 163K / NCTC 11711) (Mesomycoplasma mobile), this protein is Bifunctional protein FolD.